Consider the following 143-residue polypeptide: Nucleoside diphosphate kinase (143 aa).

Positions 11, 59, 87, 93, 104, and 114 each coordinate ATP. H117 (pros-phosphohistidine intermediate) is an active-site residue.

The protein belongs to the NDK family. In terms of assembly, homotetramer. Mg(2+) is required as a cofactor.

The protein resides in the cytoplasm. The catalysed reaction is a 2'-deoxyribonucleoside 5'-diphosphate + ATP = a 2'-deoxyribonucleoside 5'-triphosphate + ADP. The enzyme catalyses a ribonucleoside 5'-diphosphate + ATP = a ribonucleoside 5'-triphosphate + ADP. Its function is as follows. Major role in the synthesis of nucleoside triphosphates other than ATP. The ATP gamma phosphate is transferred to the NDP beta phosphate via a ping-pong mechanism, using a phosphorylated active-site intermediate. The polypeptide is Nucleoside diphosphate kinase (Stutzerimonas stutzeri (strain A1501) (Pseudomonas stutzeri)).